The sequence spans 136 residues: Nucleoside diphosphate kinase (136 aa).

ATP contacts are provided by lysine 10, phenylalanine 58, arginine 86, threonine 92, arginine 104, and asparagine 114. Histidine 117 (pros-phosphohistidine intermediate) is an active-site residue.

It belongs to the NDK family. In terms of assembly, homotetramer. The cofactor is Mg(2+).

The protein localises to the cytoplasm. The enzyme catalyses a 2'-deoxyribonucleoside 5'-diphosphate + ATP = a 2'-deoxyribonucleoside 5'-triphosphate + ADP. It catalyses the reaction a ribonucleoside 5'-diphosphate + ATP = a ribonucleoside 5'-triphosphate + ADP. Its function is as follows. Major role in the synthesis of nucleoside triphosphates other than ATP. The ATP gamma phosphate is transferred to the NDP beta phosphate via a ping-pong mechanism, using a phosphorylated active-site intermediate. This Mycobacterium sp. (strain MCS) protein is Nucleoside diphosphate kinase.